A 577-amino-acid polypeptide reads, in one-letter code: MKFHPTRPFGLYFEFFIIISFFFTSESTGDVESFMKYSNVAFSEGLAGFDSLAHVYQALLKKSTCYQEVAATLISKCSLLNTELTIDNRIHSAIQMTLCDFERSQILAPSECVRGSQSECVSKLESTSTWWLSFTSHFHDVNHLCRLANLEMQKELSIEVNMNVTLVQKQFLEMVILHLRNFESVTDKMNQRIDKFDGKFNSVIENSFKDINFRVNQEIMGLVELQNHQQEGMVQQKEILSTIKQLKSEIFDINSFFANFIEESAGYSNSLIEKLNEKFTSENAIALSAIGKYTSEFSAFMEKRIKNLITTTEDSLQQSVQSNIDFVNSGFQPLYDLTIQLKEELQSLKRLSSEQQNLQHEQILQWKSDFLNVSKDHLKVLQQLRPLIDIVEKFMNVYFKGLSNIISSFAFIGFTLFATLSSLFFKVLKIHRRPIIVFGSLSIIFIHIYCFKITSWVNLYGWITCTIARTLSFIKLNIRTFYLTAFLCALLNFLRYLKYRNSKKDTELSLFLPAPEECNIYHNEHIQVQEDNYLCPIENSLIDLFGSENNKEKLGKQENVRFAFLNSESLEQSPWWD.

The first 29 residues, M1–G29, serve as a signal peptide directing secretion. Topologically, residues D30–N404 are lumenal. 2 N-linked (GlcNAc...) asparagine glycosylation sites follow: N163 and N372. A helical transmembrane segment spans residues I405–F425. The Cytoplasmic segment spans residues K426–R433. Residues P434–T454 traverse the membrane as a helical segment. Residues S455–T470 are Lumenal-facing. A helical membrane pass occupies residues L471–L491. The Cytoplasmic segment spans residues N492–D577.

It belongs to the KAR5 family. Post-translationally, N-glycosylated.

It is found in the endoplasmic reticulum membrane. The protein resides in the nucleus membrane. Its function is as follows. Required for nuclear membrane fusion during karyogamy. The protein is Nuclear fusion protein tht1 (tht1) of Schizosaccharomyces pombe (strain 972 / ATCC 24843) (Fission yeast).